Reading from the N-terminus, the 407-residue chain is Serine/threonine transporter SstT (407 aa).

The next 9 membrane-spanning stretches (helical) occupy residues 12-32, 42-62, 81-101, 141-161, 179-199, 218-238, 245-267, 288-308, and 330-350; these read GNLI…GISS, LGIL…FILI, IIIL…LANF, ALSS…GIAL, VLKI…GLVA, ILLV…IVFF, FPLI…SSAA, ISIP…IAIL, and IIAT…LLLI.

The protein belongs to the dicarboxylate/amino acid:cation symporter (DAACS) (TC 2.A.23) family.

Its subcellular location is the cell inner membrane. The enzyme catalyses L-serine(in) + Na(+)(in) = L-serine(out) + Na(+)(out). The catalysed reaction is L-threonine(in) + Na(+)(in) = L-threonine(out) + Na(+)(out). Its function is as follows. Involved in the import of serine and threonine into the cell, with the concomitant import of sodium (symport system). This chain is Serine/threonine transporter SstT, found in Campylobacter jejuni subsp. jejuni serotype O:2 (strain ATCC 700819 / NCTC 11168).